The sequence spans 203 residues: Secreted phosphoprotein 24 (203 aa).

Positions 1–23 (MEQAMLKTLALLVLGMHYWCATG) are cleaved as a signal peptide. 2 disulfide bridges follow: Cys86–Cys96 and Cys109–Cys127. Ser90 is subject to Phosphoserine. 5 positions are modified to phosphoserine: Ser137, Ser138, Ser162, Ser165, and Ser174.

This sequence belongs to the SPP2 family. In terms of processing, phosphorylation sites are present in the extracellular medium.

The protein localises to the secreted. Could coordinate an aspect of bone turnover. This Mus musculus (Mouse) protein is Secreted phosphoprotein 24 (Spp2).